An 835-amino-acid chain; its full sequence is Transcription intermediary factor 1-beta (835 aa).

Over residues 1-19 the composition is skewed to low complexity; it reads MAASAAAASAAAASAASGS. The disordered stretch occupies residues 1 to 49; that stretch reads MAASAAAASAAAASAASGSPGPGEGSAGGEKRSTAPSAAASASASAAAS. A2 is subject to N-acetylalanine. S19 and S26 each carry phosphoserine. Residue K31 forms a Glycyl lysine isopeptide (Lys-Gly) (interchain with G-Cter in SUMO2) linkage. The span at 35–49 shows a compositional bias: low complexity; sequence APSAAASASASAAAS. S50 carries the post-translational modification Phosphoserine. The segment at 65-121 adopts an RING-type zinc-finger fold; it reads CGVCRERLRPEREPRLLPCLHSACSACLGPAAPAAANSSGDGGAAGDGTVVDCPVCK. The interval 65–376 is RBCC domain; that stretch reads CGVCRERLRP…LIYFQLHRAL (312 aa). A Glycyl lysine isopeptide (Lys-Gly) (interchain with G-Cter in SUMO2) cross-link involves residue K127. Phosphoserine is present on S138. The segment at 148–195 adopts a B box-type 1; atypical zinc-finger fold; sequence DANQCCTSCEDNAPATSYCVECSEPLCETCVEAHQRVKYTKDHTVRST. Residues C153, C156, C177, and H181 each contribute to the Zn(2+) site. K199 is covalently cross-linked (Glycyl lysine isopeptide (Lys-Gly) (interchain with G-Cter in SUMO2)). The B box-type 2 zinc-finger motif lies at 204–245; sequence ERTVYCNVHKHEPLVLFCESCDTLTCRDCQLNAHKDHQYQFL. C209, H212, C232, and H237 together coordinate Zn(2+). The interval 246 to 376 is leucine zipper alpha helical coiled-coil region; it reads EDAVRNQRKL…LIYFQLHRAL (131 aa). Positions 247 to 376 are interaction with MAGEC2; the sequence is DAVRNQRKLL…LIYFQLHRAL (130 aa). Glycyl lysine isopeptide (Lys-Gly) (interchain with G-Cter in SUMO2) cross-links involve residues K254 and K261. K266 carries the post-translational modification N6-acetyllysine. Residue K272 forms a Glycyl lysine isopeptide (Lys-Gly) (interchain with G-Cter in SUMO2) linkage. K304 carries the post-translational modification N6-acetyllysine; alternate. Residue K304 forms a Glycyl lysine isopeptide (Lys-Gly) (interchain with G-Cter in SUMO2); alternate linkage. K319 is covalently cross-linked (Glycyl lysine isopeptide (Lys-Gly) (interchain with G-Cter in SUMO2)). K340 bears the N6-acetyllysine mark. A Glycyl lysine isopeptide (Lys-Gly) (interchain with G-Cter in SUMO2) cross-link involves residue K366. Residues 366–370 form an involved in binding PPP1CA region; it reads KLIYF. The residue at position 377 (K377) is an N6-acetyllysine; alternate. K377 is covalently cross-linked (Glycyl lysine isopeptide (Lys-Gly) (interchain with G-Cter in SUMO2); alternate). K377 is covalently cross-linked (Glycyl lysine isopeptide (Lys-Gly) (interchain with G-Cter in SUMO1); alternate). Residue K407 forms a Glycyl lysine isopeptide (Lys-Gly) (interchain with G-Cter in SUMO2) linkage. Residues 411-480 are disordered; sequence ERPGTNSTGP…SRSGEGEVSG (70 aa). Residue S417 is modified to Phosphoserine. K434 participates in a covalent cross-link: Glycyl lysine isopeptide (Lys-Gly) (interchain with G-Cter in SUMO2). Positions 434-443 are enriched in polar residues; it reads KQGSGSSQPM. 3 positions are modified to phosphoserine: S437, S439, and S453. K469 participates in a covalent cross-link: Glycyl lysine isopeptide (Lys-Gly) (interchain with G-Cter in SUMO2); alternate. A Glycyl lysine isopeptide (Lys-Gly) (interchain with G-Cter in SUMO1); alternate cross-link involves residue K469. Citrulline is present on R470. A Phosphoserine modification is found at S471. Citrulline is present on R472. S473, S479, and S489 each carry phosphoserine. Positions 476–513 are HP1 box; that stretch reads GEVSGLMRKVPRVSLERLDLDLTADSQPPVFKVFPGST. Positions 481 to 494 match the PxVxL motif motif; that stretch reads LMRKVPRVSLERLD. T498 carries the post-translational modification Phosphothreonine. S501 carries the phosphoserine modification. Residue K507 forms a Glycyl lysine isopeptide (Lys-Gly) (interchain with G-Cter in SUMO2) linkage. Phosphothreonine is present on T541. K554 participates in a covalent cross-link: Glycyl lysine isopeptide (Lys-Gly) (interchain with G-Cter in SUMO2); alternate. A Glycyl lysine isopeptide (Lys-Gly) (interchain with G-Cter in SUMO); alternate cross-link involves residue K554. K575 is covalently cross-linked (Glycyl lysine isopeptide (Lys-Gly) (interchain with G-Cter in SUMO2)). Residues 584 to 618 form a disordered region; sequence GPGAEGPRLASPSGSTSSGLEVVAPEGTSAPGGGP. S594 bears the Phosphoserine mark. The PHD-type zinc-finger motif lies at 625–672; that stretch reads ATICRVCQKPGDLVMCNQCEFCFHLDCHLPALQDVPGEEWSCSLCHVL. Residue K676 forms a Glycyl lysine isopeptide (Lys-Gly) (interchain with G-Cter in SUMO) linkage. Residues S683, S689, and S697 each carry the phosphoserine modification. Residues 695-799 enclose the Bromo domain; sequence KLSPANQRKC…RFFETRMNEA (105 aa). K750 participates in a covalent cross-link: Glycyl lysine isopeptide (Lys-Gly) (interchain with G-Cter in SUMO2); alternate. K750 is covalently cross-linked (Glycyl lysine isopeptide (Lys-Gly) (interchain with G-Cter in SUMO1); alternate). K750 is covalently cross-linked (Glycyl lysine isopeptide (Lys-Gly) (interchain with G-Cter in SUMO); alternate). The residue at position 752 (S752) is a Phosphoserine. Y755 carries the post-translational modification Phosphotyrosine. At S757 the chain carries Phosphoserine. 3 positions are modified to N6-acetyllysine; alternate: K770, K774, and K779. Residues K770, K774, and K779 each participate in a glycyl lysine isopeptide (Lys-Gly) (interchain with G-Cter in SUMO2); alternate cross-link. A Glycyl lysine isopeptide (Lys-Gly) (interchain with G-Cter in SUMO1); alternate cross-link involves residue K779. Phosphoserine is present on S784. K804 participates in a covalent cross-link: Glycyl lysine isopeptide (Lys-Gly) (interchain with G-Cter in SUMO2); alternate. K804 participates in a covalent cross-link: Glycyl lysine isopeptide (Lys-Gly) (interchain with G-Cter in SUMO); alternate. The segment at 815–835 is disordered; the sequence is MSLPGAGLSSQELSGGPGDGP. S824 bears the Phosphoserine; by ATM and ATR and dsDNA kinase mark.

The protein belongs to the TRIM/RBCC family. Interacts with SETX. Oligomer; the RBCC domain homotrimerizes and interacts with one molecule of KRAB to form the KRAB-KAP1 corepressor complex. Binding to a KRAB domain is an absolute requirement for silencing gene expression. Interacts with CEBPB and NR3C1. Interacts with a number of KRAB-ZFP proteins including ZNF10, ZFP53, ZFP68, ZNF382 and ZNF256. Interacts with NCOR1, NR3C1 and CHD3. Interacts with CEBPB (via the RING-type and PHD-type zinc fingers). Component of a ternary complex that includes TRIM28, a HP1 protein (CBX1, CBX3 OR CBX5), a KRAB domain-containing protein, and DNA. Interacts with CBX5 (via the PxVxL motif); the interaction occurs in interphase nuclei and competes for binding POGZ. Interacts with POGZ; the interaction competes for interaction with CBX5. Interacts with SETDB1; the interaction is enhanced by KAP1 sumoylation, stimulates SETDB1 histone methyltransferase activity and gene silencing. Interacts (via the PHD-type zinc finger) with UBE2I; the interaction is required for sumoylation and repressor activity. Component of the TRIM28/KAP1-ERBB4-MDM2 complex involved in connecting growth factor and DNA damage responses. Interacts directly with ERBB4; the interaction represses ERBB4-mediated transcription activity. Interacts with MDM2; the interaction contributes to p53/TP53 inactivation. Component of the TRIM28/KAP1-MDM2-p53/TP53; involved in regulating p53/TP53 stabilization and activity. Interacts (via the leucine zipper alpha helical coiled-coil) with E2F1 (central region); the interaction inhibits E2F1 acetylation and transcriptional activity. Interacts with PPP1CA; the interaction dephosphorylates TRIM28 at Ser-824 and forms a complex at the p21 promoter site. Interacts with PPP1CB; the interaction is weak but is increased on dephosphorylation at Ser-824. Interacts with FES/FPS. Interacts with SMARCAD1. Interacts with, and sumoylates IRF7. Interacts with MAGEC2. Part of a complex composed of TRIM28, HDAC1, HDAC2 and EHMT2. Interacts with AICDA. Interacts (via the RBCC domain) with KOX1 (via the KRAB domain), ZNF268 (via the KRAB domain) and ZNF300 (via the KRAB domain); the interactions increase KOX1, ZNF268 and ZNF300 nuclear localization activities. The large PER complex involved in the histone methylation is composed of at least PER2, CBX3, TRIM28, SUV39H1 and/or SUV39H2; CBX3 mediates the formation of the complex. Interacts with isoform 2 of ZFP90. Forms a complex with FOXP3 in the presence of isoform 2 of ZFP90. Interacts with NR4A3; the interactions potentiates NR4A3 activity on NurRE promoter. Interacts (unphosphorylated or phosphorylated form) with ZBTB1 (via BTB domain). Probably part of a corepressor complex containing ZNF304, TRIM28, SETDB1 and DNMT1. Interacts with ATRX. Forms a complex with ATRX, SETDB1 and ZNF274. Interacts with ZFP568; the interaction mediates ZFP568 transcriptional repression activity. Interacts with RRP1B. Interacts with CRY1. Interacts with ZNF263; recruited to the SIX3 promoter along with other proteins involved in chromatin modification and transcriptional corepression where it contributes to transcriptional repression. Interacts with CYREN (via XLF motif). Interacts with TRIM17; this interaction prevents TRIM28 activity. Interacts with ZNF746. Interacts with PHF13. Interacts with ZNF354C. Interacts with ZNF432; the interaction is independent of PARP1. In terms of assembly, (Microbial infection) Interacts with herpes virus 8 protein LANA1; this interaction facilitates establishment of viral latency. In terms of processing, ATM-induced phosphorylation on Ser-824 represses sumoylation leading to the de-repression of expression of a subset of genes involved in cell cycle control and apoptosis in response to genotoxic stress. Dephosphorylation by the phosphatases, PPP1CA and PP1CB forms, allows sumoylation and expression of TRIM28 target genes. Post-translationally, sumoylation/desumoylation events regulate TRIM28-mediated transcriptional repression. Sumoylation is required for interaction with CHD3 and SETDB1 and the corepressor activity. Represses and is repressed by Ser-824 phosphorylation. Enhances the TRIM28 corepressor activity, inhibiting transcriptional activity of a number of genes including GADD45A and CDKN1A/p21. Lys-554, Lys-779 and Lys-804 are the major sites of sumoylation. In response to Dox-induced DNA damage, enhanced phosphorylation on Ser-824 prevents sumoylation and allows de-repression of CDKN1A/p21. Auto-ubiquitinated; enhanced by MAGEA2 and MAGEC2. In terms of processing, citrullinated by PADI4. Post-translationally, ADP-ribosylated by SIRT6, promoting TRIM28/KAP1 interaction with CBX5, thereby contributing to the packaging of LINE-1 retrotransposon elements into transcriptionally repressive heterochromatin. As to expression, expressed in all tissues tested including spleen, thymus, prostate, testis, ovary, small intestine, colon and peripheral blood leukocytes.

Its subcellular location is the nucleus. The catalysed reaction is S-ubiquitinyl-[E2 ubiquitin-conjugating enzyme]-L-cysteine + [acceptor protein]-L-lysine = [E2 ubiquitin-conjugating enzyme]-L-cysteine + N(6)-ubiquitinyl-[acceptor protein]-L-lysine.. The protein operates within protein modification; protein sumoylation. Nuclear corepressor for KRAB domain-containing zinc finger proteins (KRAB-ZFPs). Mediates gene silencing by recruiting CHD3, a subunit of the nucleosome remodeling and deacetylation (NuRD) complex, and SETDB1 (which specifically methylates histone H3 at 'Lys-9' (H3K9me)) to the promoter regions of KRAB target genes. Enhances transcriptional repression by coordinating the increase in H3K9me, the decrease in histone H3 'Lys-9 and 'Lys-14' acetylation (H3K9ac and H3K14ac, respectively) and the disposition of HP1 proteins to silence gene expression. Recruitment of SETDB1 induces heterochromatinization. May play a role as a coactivator for CEBPB and NR3C1 in the transcriptional activation of ORM1. Also a corepressor for ERBB4. Inhibits E2F1 activity by stimulating E2F1-HDAC1 complex formation and inhibiting E2F1 acetylation. May serve as a partial backup to prevent E2F1-mediated apoptosis in the absence of RB1. Important regulator of CDKN1A/p21(CIP1). Has E3 SUMO-protein ligase activity toward itself via its PHD-type zinc finger. Also specifically sumoylates IRF7, thereby inhibiting its transactivation activity. Ubiquitinates p53/TP53 leading to its proteasomal degradation; the function is enhanced by MAGEC2 and MAGEA2, and possibly MAGEA3 and MAGEA6. Mediates the nuclear localization of KOX1, ZNF268 and ZNF300 transcription factors. In association with isoform 2 of ZFP90, is required for the transcriptional repressor activity of FOXP3 and the suppressive function of regulatory T-cells (Treg). Probably forms a corepressor complex required for activated KRAS-mediated promoter hypermethylation and transcriptional silencing of tumor suppressor genes (TSGs) or other tumor-related genes in colorectal cancer (CRC) cells. Required to maintain a transcriptionally repressive state of genes in undifferentiated embryonic stem cells (ESCs). In ESCs, in collaboration with SETDB1, is also required for H3K9me3 and silencing of endogenous and introduced retroviruses in a DNA-methylation independent-pathway. Associates at promoter regions of tumor suppressor genes (TSGs) leading to their gene silencing. The SETDB1-TRIM28-ZNF274 complex may play a role in recruiting ATRX to the 3'-exons of zinc-finger coding genes with atypical chromatin signatures to establish or maintain/protect H3K9me3 at these transcriptionally active regions. Functionally, (Microbial infection) Plays a critical role in the shutdown of lytic gene expression during the early stage of herpes virus 8 primary infection. This inhibition is mediated through interaction with herpes virus 8 protein LANA1. In Homo sapiens (Human), this protein is Transcription intermediary factor 1-beta.